The primary structure comprises 404 residues: Coenzyme F(430) synthetase (404 aa).

112–117 (GVKGKT) is an ATP binding site.

It belongs to the MurCDEF family.

The enzyme catalyses 15,17(3)-seco-F430-17(3)-acid + ATP = coenzyme F430 + ADP + phosphate. Involved in the biosynthesis of the unique nickel-containing tetrapyrrole coenzyme F430, the prosthetic group of methyl-coenzyme M reductase (MCR), which plays a key role in methanogenesis and anaerobic methane oxidation. Catalyzes the activation the g-propionate side chain of 15,17(3)-seco-F430-17(3)-acid (seco-F430) for intramolecular C-C bond formation to yield the carbocyclic F ring of coenzyme F430. This Methanocaldococcus jannaschii (strain ATCC 43067 / DSM 2661 / JAL-1 / JCM 10045 / NBRC 100440) (Methanococcus jannaschii) protein is Coenzyme F(430) synthetase.